We begin with the raw amino-acid sequence, 377 residues long: MSTSTKRCYYETLEVERDADESKLKSSFRKLAMKFHPDRNPGDDTSEVKFKEINEAYEVLKDKDKRAAYDRFGHAAFEQGGPGGGAGFGAGFASSFSDIFEDLFGMAGQRGRGGRERGADLRYNMEITLEEAFGGKTAQIEIPVSVTCEACSGIGAKAGTKPKTCSTCGGAGRVRQSQGFFTLERTCPGCQGRGQMIEDACPSCSGQGRVTRERTLSVNIPQGVEDGTRIRLAGEGEAGVRGGPPGDLYIFLSLAQHQFFQRDGADLHCRVPISMVTAALGGEFEVPTIEKGKAKVKVPAGTQSNRRFRIASKGMPVLRSRQTGDMYVQVVVETPQNLTKKQQELLAEFEKLSSGNTQPESEGFFTKVKDFFGSRAN.

The 66-residue stretch at 8–73 (CYYETLEVER…DKRAAYDRFG (66 aa)) folds into the J domain. A CR-type zinc finger spans residues 135 to 213 (GKTAQIEIPV…CSGQGRVTRE (79 aa)). Zn(2+) contacts are provided by cysteine 148, cysteine 151, cysteine 165, cysteine 168, cysteine 187, cysteine 190, cysteine 201, and cysteine 204. CXXCXGXG motif repeat units lie at residues 148 to 155 (CEACSGIG), 165 to 172 (CSTCGGAG), 187 to 194 (CPGCQGRG), and 201 to 208 (CPSCSGQG).

This sequence belongs to the DnaJ family. Homodimer. Zn(2+) serves as cofactor.

The protein localises to the cytoplasm. Participates actively in the response to hyperosmotic and heat shock by preventing the aggregation of stress-denatured proteins and by disaggregating proteins, also in an autonomous, DnaK-independent fashion. Unfolded proteins bind initially to DnaJ; upon interaction with the DnaJ-bound protein, DnaK hydrolyzes its bound ATP, resulting in the formation of a stable complex. GrpE releases ADP from DnaK; ATP binding to DnaK triggers the release of the substrate protein, thus completing the reaction cycle. Several rounds of ATP-dependent interactions between DnaJ, DnaK and GrpE are required for fully efficient folding. Also involved, together with DnaK and GrpE, in the DNA replication of plasmids through activation of initiation proteins. The sequence is that of Chaperone protein DnaJ from Bradyrhizobium diazoefficiens (strain JCM 10833 / BCRC 13528 / IAM 13628 / NBRC 14792 / USDA 110).